Consider the following 290-residue polypeptide: Sodium/potassium-transporting ATPase subunit beta-2 (290 aa).

Topologically, residues M1–F39 are cytoplasmic. Residues I40–S67 traverse the membrane as a helical; Signal-anchor for type II membrane protein segment. The Extracellular portion of the chain corresponds to D68–T290. N96 and N118 each carry an N-linked (GlcNAc...) asparagine glycan. C129 and C150 are disulfide-bonded. Residues N153 and N159 are each glycosylated (N-linked (GlcNAc...) asparagine). C160 and C177 are oxidised to a cystine. N-linked (GlcNAc...) asparagine glycans are attached at residues N193, N197, and N238. An immunoglobulin-like region spans residues N193 to T290. A disulfide bridge connects residues C200 and C261.

The protein belongs to the X(+)/potassium ATPases subunit beta family. The sodium/potassium-transporting ATPase is composed of a catalytic alpha subunit, an auxiliary non-catalytic beta subunit and an additional regulatory subunit. Interacts with BSG.

It localises to the cell membrane. This is the non-catalytic component of the active enzyme, which catalyzes the hydrolysis of ATP coupled with the exchange of Na(+) and K(+) ions across the plasma membrane. The exact function of the beta-2 subunit is not known. In terms of biological role, mediates cell adhesion of neurons and astrocytes, and promotes neurite outgrowth. In Ochotona curzoniae (Black-lipped pika), this protein is Sodium/potassium-transporting ATPase subunit beta-2 (ATP1B2).